Reading from the N-terminus, the 262-residue chain is Probable dihydroorotate dehydrogenase B (NAD(+)), electron transfer subunit (262 aa).

An FAD-binding FR-type domain is found at 4-97 (VKPIPAEVVE…RGPYGKPFEV (94 aa)). Cys217, Cys222, Cys225, and Cys234 together coordinate [2Fe-2S] cluster.

The protein belongs to the PyrK family. As to quaternary structure, heterotetramer of 2 PyrK and 2 PyrD type B subunits. It depends on [2Fe-2S] cluster as a cofactor. The cofactor is FAD.

Its pathway is pyrimidine metabolism; UMP biosynthesis via de novo pathway; orotate from (S)-dihydroorotate (NAD(+) route): step 1/1. Functionally, responsible for channeling the electrons from the oxidation of dihydroorotate from the FMN redox center in the PyrD type B subunit to the ultimate electron acceptor NAD(+). In Methanopyrus kandleri (strain AV19 / DSM 6324 / JCM 9639 / NBRC 100938), this protein is Probable dihydroorotate dehydrogenase B (NAD(+)), electron transfer subunit.